Here is a 246-residue protein sequence, read N- to C-terminus: 2',3'-cyclic-nucleotide 3'-phosphodiesterase (246 aa).

Histidine 40 (proton donor/acceptor) is an active-site residue. Substrate is bound at residue threonine 42. The span at 133–146 (QNPQLYTKDNNGNT) shows a compositional bias: polar residues. The segment at 133 to 159 (QNPQLYTKDNNGNTIRRKPSKKKSKTT) is disordered. A compositionally biased stretch (basic residues) spans 147 to 156 (IRRKPSKKKS). Histidine 188 acts as the Proton donor/acceptor in catalysis. Positions 190 and 193 each coordinate substrate.

It belongs to the 2H phosphoesterase superfamily. CPD1 family.

It localises to the golgi apparatus. The catalysed reaction is a nucleoside 2',3'-cyclic phosphate + H2O = a nucleoside 2'-phosphate + H(+). Involved in the metabolism of ADP-ribose 1',2'-cyclic phosphate which is produced as a consequence of tRNA splicing. The sequence is that of 2',3'-cyclic-nucleotide 3'-phosphodiesterase (CPD1) from Candida albicans (strain SC5314 / ATCC MYA-2876) (Yeast).